The chain runs to 841 residues: Probable outer membrane protein pmp2 (841 aa).

Positions 1–24 are cleaved as a signal peptide; sequence MKIPLRFLLISLVPTLSMSNLLGA. An Autotransporter domain is found at 537 to 841; it reads GAPYEKRFWV…NVDAGSKIKF (305 aa).

Belongs to the PMP outer membrane protein family.

The protein resides in the secreted. It is found in the cell wall. It localises to the cell outer membrane. This chain is Probable outer membrane protein pmp2 (pmp2), found in Chlamydia pneumoniae (Chlamydophila pneumoniae).